The following is a 361-amino-acid chain: Phospho-N-acetylmuramoyl-pentapeptide-transferase (361 aa).

A run of 10 helical transmembrane segments spans residues 21–41, 73–93, 97–117, 134–154, 168–188, 200–220, 237–257, 264–284, 289–309, and 338–358; these read YITL…FLVG, TMGG…WADL, FVWV…VDDW, YFWQ…TATV, LVLP…IVGT, GLAI…AYVA, AGEL…FLWF, VFMG…VAVI, IVLF…MLQV, and QVVV…LSTL.

The protein belongs to the glycosyltransferase 4 family. MraY subfamily. The cofactor is Mg(2+).

The protein localises to the cell inner membrane. The catalysed reaction is UDP-N-acetyl-alpha-D-muramoyl-L-alanyl-gamma-D-glutamyl-meso-2,6-diaminopimeloyl-D-alanyl-D-alanine + di-trans,octa-cis-undecaprenyl phosphate = di-trans,octa-cis-undecaprenyl diphospho-N-acetyl-alpha-D-muramoyl-L-alanyl-D-glutamyl-meso-2,6-diaminopimeloyl-D-alanyl-D-alanine + UMP. It participates in cell wall biogenesis; peptidoglycan biosynthesis. Catalyzes the initial step of the lipid cycle reactions in the biosynthesis of the cell wall peptidoglycan: transfers peptidoglycan precursor phospho-MurNAc-pentapeptide from UDP-MurNAc-pentapeptide onto the lipid carrier undecaprenyl phosphate, yielding undecaprenyl-pyrophosphoryl-MurNAc-pentapeptide, known as lipid I. This chain is Phospho-N-acetylmuramoyl-pentapeptide-transferase, found in Methylobacillus flagellatus (strain ATCC 51484 / DSM 6875 / VKM B-1610 / KT).